Reading from the N-terminus, the 195-residue chain is Protein LIGHT-DEPENDENT SHORT HYPOCOTYLS 4 (195 aa).

Positions 28-38 are enriched in low complexity; it reads TTTSSSSSSSS. Disordered regions lie at residues 28–51 and 162–195; these read TTTS…RYEN and SQAK…SSPN. The ALOG domain occupies 48 to 175; that stretch reads RYENQKRRDW…ARGISYEKKK (128 aa). The Nuclear localization signal signature appears at 173-177; it reads KKKRK.

Belongs to the plant homeotic and developmental regulators ALOG protein family. Induced by NAC054/CUC1 and NAC098/CUC2 in shoot organ boundary cells.

The protein resides in the nucleus. In terms of biological role, probable transcription regulator that acts as a developmental regulator by promoting cell growth in response to light. May suppress organ differentiation in the boundary region. The polypeptide is Protein LIGHT-DEPENDENT SHORT HYPOCOTYLS 4 (LSH4) (Arabidopsis thaliana (Mouse-ear cress)).